We begin with the raw amino-acid sequence, 274 residues long: HTH-type transcriptional regulator GadX (274 aa).

Residues 145 to 242 form the HTH araC/xylS-type domain; that stretch reads TRVCTVINNN…GMTPTEYQER (98 aa). 2 DNA-binding regions (H-T-H motif) span residues 162-183 and 209-232; these read ARIASELLMSPSLLKKKLREEG and IKRVAVSCGYHSVSYFIYVFRNYY.

Homodimer.

Positively regulates the expression of about fifteen genes involved in acid resistance such as gadA, gadB and gadC. Depending on the conditions (growth phase and medium), can repress gadW. Negatively regulates perA expression in acidic conditions and positively regulates it in alkaline conditions. The protein is HTH-type transcriptional regulator GadX (gadX) of Escherichia coli O127:H6 (strain E2348/69 / EPEC).